A 38-amino-acid polypeptide reads, in one-letter code: Potassium channel toxin alpha-KTx 3.3 (38 aa).

3 cysteine pairs are disulfide-bonded: Cys8–Cys28, Cys14–Cys33, and Cys18–Cys35. An interaction with Ca(2+)-activated K(+) channels region spans residues 26–33; it reads GKCMNRKC.

It belongs to the short scorpion toxin superfamily. Potassium channel inhibitor family. Alpha-KTx 03 subfamily. Expressed by the venom gland.

The protein localises to the secreted. Potent inhibitor of shaker potassium channels as well as the mammalian homologs of shaker. The polypeptide is Potassium channel toxin alpha-KTx 3.3 (Leiurus hebraeus (Hebrew deathstalker scorpion)).